A 380-amino-acid polypeptide reads, in one-letter code: 3-dehydroquinate synthase (380 aa).

It belongs to the archaeal-type DHQ synthase family.

It catalyses the reaction 2-amino-2,3,7-trideoxy-D-lyxo-hept-6-ulosonate + NAD(+) + H2O = 3-dehydroquinate + NH4(+) + NADH + H(+). Catalyzes the oxidative deamination and cyclization of 2-amino-3,7-dideoxy-D-threo-hept-6-ulosonic acid (ADH) to yield 3-dehydroquinate (DHQ), which is fed into the canonical shikimic pathway of aromatic amino acid biosynthesis. This chain is 3-dehydroquinate synthase, found in Methanosarcina barkeri (strain Fusaro / DSM 804).